The chain runs to 354 residues: Rhodopsin (354 aa).

At 1–36 (MNGTEGPNFYVPMSNKTGVVRSPFDYPQYYLAEPWQ) the chain is on the extracellular side. Residues N2 and N15 are each glycosylated (N-linked (GlcNAc...) asparagine). The helical transmembrane segment at 37–61 (YSALAAYMFLLILLGLPINFMTLFV) threads the bilayer. Residues 62–73 (TIQHKKLRTPLN) are Cytoplasmic-facing. A helical transmembrane segment spans residues 74-96 (YILLNLVFANHFMVLCGFTVTMY). At 97–110 (TSMHGYFIFGPTGC) the chain is on the extracellular side. Residues C110 and C187 are joined by a disulfide bond. A helical transmembrane segment spans residues 111–133 (YIEGFFATLGGEVALWSLVVLAV). The 'Ionic lock' involved in activated form stabilization motif lies at 134-136 (ERY). Residues 134-152 (ERYIVVCKPMANFRFGENH) are Cytoplasmic-facing. Residues 153 to 173 (AIMGVAFTWIMALSCAAPPLF) form a helical membrane-spanning segment. The Extracellular portion of the chain corresponds to 174 to 202 (GWSRYIPEGMQCSCGVDYYTLKPEVNNES). The chain crosses the membrane as a helical span at residues 203–224 (FVIYMFIVHFTIPLIVIFFCYG). Over 225 to 252 (RLLCTVKEAAAQQQESLTTQKAEKEVTR) the chain is Cytoplasmic. The helical transmembrane segment at 253-274 (MVVIMVVFFLICWVPYAYVAFY) threads the bilayer. Topologically, residues 275–286 (IFTHQGSNFGPV) are extracellular. Residues 287 to 308 (FMTVPAFFAKSSAIYNPVIYIV) traverse the membrane as a helical segment. N6-(retinylidene)lysine is present on K296. The Cytoplasmic segment spans residues 309-354 (LNKQFRNCLITTLCCGKNPFGDEDGSSAATSKTEASSVSSSQVSPA). Residues C322 and C323 are each lipidated (S-palmitoyl cysteine). The disordered stretch occupies residues 331 to 354 (EDGSSAATSKTEASSVSSSQVSPA). Positions 334–354 (SSAATSKTEASSVSSSQVSPA) are enriched in low complexity.

It belongs to the G-protein coupled receptor 1 family. Opsin subfamily. Contains one covalently linked retinal chromophore. Upon light absorption, the covalently bound 11-cis-retinal is converted to all-trans-retinal. After hydrolysis of the Schiff base and release of the covalently bound all-trans-retinal, active rhodopsin is regenerated by binding of a fresh molecule of 11-cis-retinal.

Its subcellular location is the membrane. The protein resides in the cell projection. The protein localises to the cilium. It is found in the photoreceptor outer segment. Functionally, photoreceptor required for image-forming vision at low light intensity. Required for photoreceptor cell viability after birth. Light-induced isomerization of 11-cis to all-trans retinal triggers a conformational change that activates signaling via G-proteins. Subsequent receptor phosphorylation mediates displacement of the bound G-protein alpha subunit by arrestin and terminates signaling. The sequence is that of Rhodopsin (rho) from Xenopus laevis (African clawed frog).